A 394-amino-acid chain; its full sequence is Glycerol-3-phosphate dehydrogenase [NAD(+)] 2 (394 aa).

Residues 41-46, K152, and A185 each bind NAD(+); that span reads GSGNWG. A substrate-binding site is contributed by K152. K243 acts as the Proton acceptor in catalysis. NAD(+) is bound by residues R308 and Q337. A substrate-binding site is contributed by 308-309; that stretch reads RN.

Belongs to the NAD-dependent glycerol-3-phosphate dehydrogenase family.

The catalysed reaction is sn-glycerol 3-phosphate + NAD(+) = dihydroxyacetone phosphate + NADH + H(+). The polypeptide is Glycerol-3-phosphate dehydrogenase [NAD(+)] 2 (gpd2) (Cyberlindnera jadinii (Torula yeast)).